The sequence spans 297 residues: Acetylglutamate kinase (297 aa).

Residues 68–69 (GG), R90, and N189 contribute to the substrate site.

This sequence belongs to the acetylglutamate kinase family. ArgB subfamily.

It localises to the cytoplasm. The enzyme catalyses N-acetyl-L-glutamate + ATP = N-acetyl-L-glutamyl 5-phosphate + ADP. It functions in the pathway amino-acid biosynthesis; L-arginine biosynthesis; N(2)-acetyl-L-ornithine from L-glutamate: step 2/4. Functionally, catalyzes the ATP-dependent phosphorylation of N-acetyl-L-glutamate. This is Acetylglutamate kinase from Akkermansia muciniphila (strain ATCC BAA-835 / DSM 22959 / JCM 33894 / BCRC 81048 / CCUG 64013 / CIP 107961 / Muc).